The following is a 65-amino-acid chain: Small ribosomal subunit protein bS21B (65 aa).

The protein belongs to the bacterial ribosomal protein bS21 family.

The protein is Small ribosomal subunit protein bS21B of Geobacter sulfurreducens (strain ATCC 51573 / DSM 12127 / PCA).